A 1358-amino-acid chain; its full sequence is Phosphoinositide 3-kinase regulatory subunit 4 (1358 aa).

Residue Gly2 is the site of N-myristoyl glycine attachment. Residues 26–324 (FEYDKSLGST…AFPEIFYTFL (299 aa)) enclose the Protein kinase domain. ATP is bound by residues 32 to 40 (LGSTRFFKV) and Lys53. Asp148 functions as the Proton acceptor in the catalytic mechanism. 4 HEAT repeats span residues 413–450 (ILLDRITPYLLHFSNDSVPRVRAEALRTLTKVLALVQE), 458–495 (IYPEYILPGIAHLAQDDATIVRLAYAENIALLAETALR), 572–610 (KANDVLLSHMITFLNDKNDWHLRGAFFDSIVGVAAYVGW), and 612–648 (SSSILKPLLQQGLSDAEEFVIVKALNALTCMCQLGLL). Phosphoserine is present on residues Ser808, Ser813, Ser853, and Ser865. 6 WD repeats span residues 991–1030 (EHKSAVNRIRVSDEHLLFATCSNDGTVKIWNSQKMEGKTT), 1040–1079 (RIGGRVKTLTFCQGSHYLAIASDNGAVQLLGIEASKLPKS), 1093–1134 (KEDG…NAWT), 1139–1178 (LKSGLITSFAVDIHQCWLCIGTSSGAMACWDMRFQLPISS), 1182–1223 (PSRA…RRLT), and 1237–1278 (PSPH…RSYV). The segment at 1307–1326 (KQKVGPSDDTPRRGPESLPV) is disordered. The segment covering 1315–1326 (DTPRRGPESLPV) has biased composition (basic and acidic residues). Thr1316 carries the post-translational modification Phosphothreonine. Residues 1327-1358 (GHHDIITDIATFQTTQGFIVTASRDGIVKVWK) form a WD 7 repeat.

It belongs to the protein kinase superfamily. Ser/Thr protein kinase family. As to quaternary structure, component of the PI3K (PI3KC3/PI3K-III/class III phosphatidylinositol 3-kinase) complex the core of which is composed of the catalytic subunit PIK3C3, the regulatory subunit PIK3R4 and BECN1 associating with additional regulatory/auxiliary subunits to form alternative complex forms. Alternative complex forms containing a fourth regulatory subunit in a mutually exclusive manner are PI3K complex I (PI3KC3-C1) containing ATG14, and PI3K complex II (PI3KC3-C2) containing UVRAG. PI3KC3-C1 displays a V-shaped architecture with PIK3R4 serving as a bridge between PIK3C3 and the ATG14:BECN1 subcomplex. Both, PI3KC3-C1 and PI3KC3-C2, can associate with further regulatory subunits, such as RUBCN, SH3GLB1/Bif-1, AMBRA1 and NRBF2. PI3KC3-C1 probably associates with PIK3CB. Interacts with RAB7A in the presence of PIK3C3/VPS34. Interacts with NRBF2. Interacts with ARMC3. It depends on Mn(2+) as a cofactor. Post-translationally, myristoylated. Probably autophosphorylated.

The protein localises to the late endosome. Its subcellular location is the cytoplasmic vesicle. It is found in the autophagosome. It localises to the membrane. The enzyme catalyses L-seryl-[protein] + ATP = O-phospho-L-seryl-[protein] + ADP + H(+). It catalyses the reaction L-threonyl-[protein] + ATP = O-phospho-L-threonyl-[protein] + ADP + H(+). Regulatory subunit of the PI3K complex that mediates formation of phosphatidylinositol 3-phosphate; different complex forms are believed to play a role in multiple membrane trafficking pathways: PI3KC3-C1 is involved in initiation of autophagosomes and PI3KC3-C2 in maturation of autophagosomes and endocytosis. Involved in regulation of degradative endocytic trafficking and cytokinesis, probably in the context of PI3KC3-C2. This Mus musculus (Mouse) protein is Phosphoinositide 3-kinase regulatory subunit 4 (Pik3r4).